We begin with the raw amino-acid sequence, 169 residues long: Oleosin Ara h 10.0101 (169 aa).

A run of 2 helical transmembrane segments spans residues 39-59 and 73-93; these read VIAV…AGLA and LFIL…LSVA. Residues 146–156 are compositionally biased toward basic and acidic residues; it reads KDVGQKTKEVG. The disordered stretch occupies residues 146–169; the sequence is KDVGQKTKEVGQEIQTKAQDSKRT.

This sequence belongs to the oleosin family. As to expression, expressed in seeds (at protein level).

The protein resides in the lipid droplet. It is found in the membrane. In terms of biological role, may have a structural role to stabilize the lipid body during desiccation of the seed by preventing coalescence of the oil. Probably interacts with both lipid and phospholipid moieties of lipid bodies. May also provide recognition signals for specific lipase anchorage in lipolysis during seedling growth. In Arachis hypogaea (Peanut), this protein is Oleosin Ara h 10.0101.